Here is a 489-residue protein sequence, read N- to C-terminus: MSAASQRVDAFGEEAGYHKGLKPRQLQMIGIGGAIGTGLFLGASGRLAKAGPGLFLVYGVCGVFVFLILRALGELVLHRPSSGSFVSYAREFFGEKAAYAVGWMYFLHWAMTSIVDTTAIATYLQRWTIFTVVPQWILALIALTVVLSMNLISVEWFGELEFWAALIKVLALMAFLVVGTVFLAGRYPVDGHSTGLSLWNNHGGLFPTSWLPLLIVTSGVVFAYSAVELVGTAAGETAEPEKIMPRAINSVVARIAIFYVGSVALLALLLPYTAYKAGESPFVTFFSKIGFHGAGDLMNIVVLTAALSSLNAGLYSTGRVMHSIAMSGSAPRFTARMSKSGVPYGGIVLTAVITLFGVALNAFKPGEAFEIVLNMSALGIIAGWATIVLCQLRLHKLANAGIMQRPRFRMPFSPYSGYLTLLFLLVVLVTMASDKPIGTWTVATLIIVIPALTAGWYLVRKRVMAVARERLGHTGPFPAVANPPVRSRD.

12 helical membrane-spanning segments follow: residues 25–45, 49–69, 100–120, 137–157, 162–182, 210–230, 255–275, 289–309, 344–364, 369–389, 413–433, and 439–459; these read QLQM…GASG, KAGP…FLIL, AVGW…TTAI, ILAL…VEWF, FWAA…GTVF, WLPL…VELV, IAIF…YTAY, IGFH…ALSS, YGGI…NAFK, FEIV…TIVL, SPYS…TMAS, and TWTV…WYLV.

The protein belongs to the amino acid-polyamine-organocation (APC) superfamily. Amino acid transporter (AAT) (TC 2.A.3.1) family.

The protein resides in the cell membrane. The sequence is that of L-asparagine permease 1 (ansP1) from Mycobacterium bovis (strain ATCC BAA-935 / AF2122/97).